Reading from the N-terminus, the 46-residue chain is Protein PsbN (46 aa).

The helical transmembrane segment at 10 to 30 (LIITILAVTIAFTAVSLYTAF) threads the bilayer.

It belongs to the PsbN family.

The protein resides in the cellular thylakoid membrane. May play a role in photosystem I and II biogenesis. The polypeptide is Protein PsbN (Acaryochloris marina (strain MBIC 11017)).